The sequence spans 184 residues: Peptidoglycan-recognition protein SC2 (184 aa).

Residues 1–20 (MANKALILLAVLFCAQAVLG) form the signal peptide. Residues 45–169 (SYAVIHHTAG…RQVGSTECPG (125 aa)) form the N-acetylmuramoyl-L-alanine amidase domain. His50 serves as a coordination point for Zn(2+). Cysteines 57 and 63 form a disulfide. Zn(2+) contacts are provided by His159 and Cys167.

The protein belongs to the N-acetylmuramoyl-L-alanine amidase 2 family. Zn(2+) serves as cofactor.

The protein resides in the secreted. It carries out the reaction Hydrolyzes the link between N-acetylmuramoyl residues and L-amino acid residues in certain cell-wall glycopeptides.. Functionally, N-acetylmuramyl-L-alanine amidase involved in innate immunity by degrading bacterial peptidoglycans (PGN). Probably plays a scavenger role by digesting biologically active PGN into biologically inactive fragments. Has no direct bacteriolytic activity. In Drosophila simulans (Fruit fly), this protein is Peptidoglycan-recognition protein SC2 (PGRP-SC2).